We begin with the raw amino-acid sequence, 338 residues long: Beta-ketoacyl-[acyl-carrier-protein] synthase III (338 aa).

Active-site residues include Cys119 and His261. An ACP-binding region spans residues 262–266; it reads QANQR. Residue Asn291 is part of the active site.

It belongs to the thiolase-like superfamily. FabH family. In terms of assembly, homodimer.

It localises to the cytoplasm. The catalysed reaction is malonyl-[ACP] + acetyl-CoA + H(+) = 3-oxobutanoyl-[ACP] + CO2 + CoA. It participates in lipid metabolism; fatty acid biosynthesis. In terms of biological role, catalyzes the condensation reaction of fatty acid synthesis by the addition to an acyl acceptor of two carbons from malonyl-ACP. Catalyzes the first condensation reaction which initiates fatty acid synthesis and may therefore play a role in governing the total rate of fatty acid production. Possesses both acetoacetyl-ACP synthase and acetyl transacylase activities. Its substrate specificity determines the biosynthesis of branched-chain and/or straight-chain of fatty acids. This chain is Beta-ketoacyl-[acyl-carrier-protein] synthase III, found in Prochlorococcus marinus (strain SARG / CCMP1375 / SS120).